A 274-amino-acid polypeptide reads, in one-letter code: NH(3)-dependent NAD(+) synthetase (274 aa).

Residue glycine 46 to serine 53 coordinates ATP. Residue aspartate 52 participates in Mg(2+) binding. Arginine 140 serves as a coordination point for deamido-NAD(+). Position 160 (threonine 160) interacts with ATP. Residue glutamate 165 coordinates Mg(2+). The deamido-NAD(+) site is built by lysine 173 and aspartate 180. ATP-binding residues include lysine 189 and threonine 211. Residue histidine 260–lysine 261 coordinates deamido-NAD(+).

It belongs to the NAD synthetase family. Homodimer.

The enzyme catalyses deamido-NAD(+) + NH4(+) + ATP = AMP + diphosphate + NAD(+) + H(+). It functions in the pathway cofactor biosynthesis; NAD(+) biosynthesis; NAD(+) from deamido-NAD(+) (ammonia route): step 1/1. In terms of biological role, catalyzes the ATP-dependent amidation of deamido-NAD to form NAD. Uses ammonia as a nitrogen source. The chain is NH(3)-dependent NAD(+) synthetase from Pectobacterium carotovorum subsp. carotovorum (strain PC1).